We begin with the raw amino-acid sequence, 279 residues long: Bifunctional protein FolD (279 aa).

Residues 166–168 (GRS) and Ser-191 contribute to the NADP(+) site.

It belongs to the tetrahydrofolate dehydrogenase/cyclohydrolase family. As to quaternary structure, homodimer.

The catalysed reaction is (6R)-5,10-methylene-5,6,7,8-tetrahydrofolate + NADP(+) = (6R)-5,10-methenyltetrahydrofolate + NADPH. It carries out the reaction (6R)-5,10-methenyltetrahydrofolate + H2O = (6R)-10-formyltetrahydrofolate + H(+). The protein operates within one-carbon metabolism; tetrahydrofolate interconversion. Its function is as follows. Catalyzes the oxidation of 5,10-methylenetetrahydrofolate to 5,10-methenyltetrahydrofolate and then the hydrolysis of 5,10-methenyltetrahydrofolate to 10-formyltetrahydrofolate. In Shouchella clausii (strain KSM-K16) (Alkalihalobacillus clausii), this protein is Bifunctional protein FolD.